Consider the following 171-residue polypeptide: Protein phosphatase 1 regulatory subunit 1A (171 aa).

M1 is subject to N-acetylmethionine. Residues 9-12 (KIQF) are essential for activity. The disordered stretch occupies residues 17–171 (LEPHLDPEAA…PLDSQGASLV (155 aa)). Over residues 19-29 (PHLDPEAAEQI) the composition is skewed to basic and acidic residues. T35 bears the Phosphothreonine; by PKA mark. The essential for activity stretch occupies residues 42 to 54 (TSDQSSPEVDEDR). Phosphoserine is present on residues S43, S46, S47, and S67. Residues 122–133 (GSASRPDTSGTA) are compositionally biased toward polar residues. Over residues 137–148 (AESKPKTQEQRG) the composition is skewed to basic and acidic residues. Residues 143-171 (TQEQRGVEPSTEDLSAHMLPLDSQGASLV) are interaction with PPP1R15A.

The protein belongs to the protein phosphatase inhibitor 1 family. Interacts with PPP1R15A. Post-translationally, phosphorylation of Thr-35 is required for activity.

Inhibitor of protein-phosphatase 1. This protein may be important in hormonal control of glycogen metabolism. Hormones that elevate intracellular cAMP increase I-1 activity in many tissues. I-1 activation may impose cAMP control over proteins that are not directly phosphorylated by PKA. Following a rise in intracellular calcium, I-1 is inactivated by calcineurin (or PP2B). Does not inhibit type-2 phosphatases. The chain is Protein phosphatase 1 regulatory subunit 1A (Ppp1r1a) from Rattus norvegicus (Rat).